Here is a 346-residue protein sequence, read N- to C-terminus: MRPILLSGHERALTQIKYNRDGDLLFSVSKDQQICVWFAHNGERLGTYHGHQGAIWTIDVDPTSTILASGSADNTIRLWEIKTGRLLKTWDFPTAVKRVEFSEDGSKLLGVTEKRMGHLGTIVVLDIKLDVDAEQSDEKAMTIVCEDSKATVAGWSYLSKYIIAGHEDGSVSQFDGKNGDLLYNIPIHELNQPITDLQWSHDRTYFITASKDKTSKLITAKDLEVLKTYPADTPLNSATITRKKDFVILGGGQAAMDVTTTSARQGKFEARFYHKIFESEIGRVRGHFGPLNTVAADPTGKSYASGGEDGYVRIHHFDKGYFDFMYEVERERQNKLNQQQQQTISA.

5 WD repeats span residues 8–49, 50–91, 145–184, 189–228, and 286–325; these read GHER…GTYH, GHQG…KTWD, CEDS…LLYN, ELNQ…VLKT, and GHFG…FDFM.

It belongs to the eIF-3 subunit I family. In terms of assembly, component of the eukaryotic translation initiation factor 3 (eIF-3) complex.

It localises to the cytoplasm. Component of the eukaryotic translation initiation factor 3 (eIF-3) complex, which is involved in protein synthesis of a specialized repertoire of mRNAs and, together with other initiation factors, stimulates binding of mRNA and methionyl-tRNAi to the 40S ribosome. The eIF-3 complex specifically targets and initiates translation of a subset of mRNAs involved in cell proliferation. This chain is Eukaryotic translation initiation factor 3 subunit I (tif-34), found in Neurospora crassa (strain ATCC 24698 / 74-OR23-1A / CBS 708.71 / DSM 1257 / FGSC 987).